The primary structure comprises 322 residues: Cytochrome f (322 aa).

The first 35 residues, 1–35 (MQNRNIFSWVKEQTTRSISVSIMILIYVITWTSIS), serve as a signal peptide directing secretion. Y38, C58, C61, and H62 together coordinate heme. The chain crosses the membrane as a helical span at residues 288 to 308 (VQGLFFFFASVILAQIFLVLK).

It belongs to the cytochrome f family. The 4 large subunits of the cytochrome b6-f complex are cytochrome b6, subunit IV (17 kDa polypeptide, petD), cytochrome f and the Rieske protein, while the 4 small subunits are PetG, PetL, PetM and PetN. The complex functions as a dimer. Heme is required as a cofactor.

The protein localises to the plastid. The protein resides in the chloroplast thylakoid membrane. In terms of biological role, component of the cytochrome b6-f complex, which mediates electron transfer between photosystem II (PSII) and photosystem I (PSI), cyclic electron flow around PSI, and state transitions. This chain is Cytochrome f, found in Nandina domestica (Heavenly bamboo).